Consider the following 360-residue polypeptide: Sensor histidine kinase LiaS (360 aa).

Residues 1 to 15 (MRKKMLASLQWRAIR) lie on the Cytoplasmic side of the membrane. A helical transmembrane segment spans residues 16 to 36 (MTTGISLLLFVCLISFMMFYY). Residues 37–47 (RLDPLVLLSSS) are Extracellular-facing. Residues 48 to 68 (WFGIPFILILLLISVTVGFAS) form a helical membrane-spanning segment. At 69 to 360 (GYMYGNRLKT…ENERDSSIID (292 aa)) the chain is on the cytoplasmic side. Positions 74–126 (NRLKTRIDTLIESILTFENGNFAYRIPPLGDDEIGLAADQLNEMAKRVELQVA) constitute an HAMP domain. In terms of domain architecture, Histidine kinase spans 153 to 346 (RLARDLHDAV…QIEVKVPIFP (194 aa)). His159 carries the post-translational modification Phosphohistidine; by autocatalysis.

Its subcellular location is the cell membrane. The catalysed reaction is ATP + protein L-histidine = ADP + protein N-phospho-L-histidine.. Its function is as follows. Member of the two-component regulatory system LiaS/LiaR probably involved in response to a subset of cell wall-active antibiotics that interfere with the lipid II cycle in the cytoplasmic membrane (bacitracin, nisin, ramoplanin and vancomycin). Also seems to be involved in response to cationic antimicrobial peptides and secretion stress. Activates probably LiaR by phosphorylation. This is Sensor histidine kinase LiaS (liaS) from Bacillus subtilis (strain 168).